Here is a 187-residue protein sequence, read N- to C-terminus: Large ribosomal subunit protein uL13 (187 aa).

It belongs to the universal ribosomal protein uL13 family. As to quaternary structure, part of the 50S ribosomal subunit.

In terms of biological role, this protein is one of the early assembly proteins of the 50S ribosomal subunit, although it is not seen to bind rRNA by itself. It is important during the early stages of 50S assembly. The protein is Large ribosomal subunit protein uL13 of Pyrobaculum aerophilum (strain ATCC 51768 / DSM 7523 / JCM 9630 / CIP 104966 / NBRC 100827 / IM2).